We begin with the raw amino-acid sequence, 222 residues long: DnaJ homolog subfamily B member 9 (222 aa).

A signal peptide spans 1 to 23 (MATPQSVFVFAICILMITELILA). The region spanning 26–90 (NYYDILGVPK…NRRKEYDIIG (65 aa)) is the J domain. Positions 91–222 (HSAFTNGKGQ…VTTYTDCSGQ (132 aa)) are divergent targeting domain. Ser133 bears the Phosphoserine mark.

As to quaternary structure, interacts with HSPA5/BiP; interaction is direct. Interacts with ERN1/IRE1 (via the luminal region). Interacts with DERL1.

The protein localises to the endoplasmic reticulum lumen. In terms of biological role, co-chaperone for Hsp70 protein HSPA5/BiP that acts as a key repressor of the ERN1/IRE1-mediated unfolded protein response (UPR). J domain-containing co-chaperones stimulate the ATPase activity of Hsp70 proteins and are required for efficient substrate recognition by Hsp70 proteins. In the unstressed endoplasmic reticulum, interacts with the luminal region of ERN1/IRE1 and selectively recruits HSPA5/BiP: HSPA5/BiP disrupts the dimerization of the active ERN1/IRE1 luminal region, thereby inactivating ERN1/IRE1. Also involved in endoplasmic reticulum-associated degradation (ERAD) of misfolded proteins. Required for survival of B-cell progenitors and normal antibody production. This is DnaJ homolog subfamily B member 9 from Rattus norvegicus (Rat).